The sequence spans 355 residues: UPF0324 membrane protein PA5383 (355 aa).

10 helical membrane-spanning segments follow: residues 20–37 (IPGLLLSAALAGVAILLG), 44–66 (HNGISALTLAIVLGILVGNTLYP), 71–93 (GSAAGVGFSKQILLRAGIILYGL), 100–122 (IAGVGLHGVLLDALMLASTFGLA), 137–159 (TLLIGAGSSICGAAAVMATEPVV), 166–188 (VAVAVSTVVVFGTLGIFLYPALF), 233–255 (AVIAKMVRVMMLAPFLILLSAWL), 275–297 (WFAVGFVLVAGLNSLVSLPPALV), 307–324 (LLAMAMAGLGLGTHLSAI), and 331–353 (PLLLAALLFAWLVLGGGFLTRLA).

Belongs to the UPF0324 family.

It localises to the cell membrane. In Pseudomonas aeruginosa (strain ATCC 15692 / DSM 22644 / CIP 104116 / JCM 14847 / LMG 12228 / 1C / PRS 101 / PAO1), this protein is UPF0324 membrane protein PA5383.